The chain runs to 348 residues: GTPase Obg 1 (348 aa).

The 159-residue stretch at 1–159 (MSFVDEAKIH…HCVLLKLKIV (159 aa)) folds into the Obg domain. One can recognise an OBG-type G domain in the interval 160–329 (SDVGIIGMPN…LHAQVKKAVV (170 aa)). Residues 166–173 (GMPNAGKS), 191–195 (FTTLE), 212–215 (DIPG), 279–282 (NKCD), and 310–312 (GDE) contribute to the GTP site. The Mg(2+) site is built by Ser173 and Thr193.

Belongs to the TRAFAC class OBG-HflX-like GTPase superfamily. OBG GTPase family. In terms of assembly, monomer. Requires Mg(2+) as cofactor.

Its subcellular location is the cytoplasm. In terms of biological role, an essential GTPase which binds GTP, GDP and possibly (p)ppGpp with moderate affinity, with high nucleotide exchange rates and a fairly low GTP hydrolysis rate. Plays a role in control of the cell cycle, stress response, ribosome biogenesis and in those bacteria that undergo differentiation, in morphogenesis control. This is GTPase Obg 1 from Anaplasma marginale (strain St. Maries).